A 128-amino-acid polypeptide reads, in one-letter code: Large ribosomal subunit protein bL21 (128 aa).

The segment at 104–128 (GKTPTVGPRPKKEKVVEPAEGEGDH) is disordered. Over residues 116–128 (EKVVEPAEGEGDH) the composition is skewed to basic and acidic residues.

Belongs to the bacterial ribosomal protein bL21 family. As to quaternary structure, part of the 50S ribosomal subunit. Contacts protein L20.

Functionally, this protein binds to 23S rRNA in the presence of protein L20. The chain is Large ribosomal subunit protein bL21 from Nitrobacter hamburgensis (strain DSM 10229 / NCIMB 13809 / X14).